Reading from the N-terminus, the 246-residue chain is Pyridoxine 5'-phosphate synthase (246 aa).

Asn12 contacts 3-amino-2-oxopropyl phosphate. Residue 14–15 (DH) coordinates 1-deoxy-D-xylulose 5-phosphate. Arg23 is a binding site for 3-amino-2-oxopropyl phosphate. His48 functions as the Proton acceptor in the catalytic mechanism. 2 residues coordinate 1-deoxy-D-xylulose 5-phosphate: Arg50 and His55. Glu75 serves as the catalytic Proton acceptor. Residue Thr105 participates in 1-deoxy-D-xylulose 5-phosphate binding. His196 (proton donor) is an active-site residue. 3-amino-2-oxopropyl phosphate is bound by residues Gly197 and 218–219 (GH).

Belongs to the PNP synthase family. As to quaternary structure, homooctamer; tetramer of dimers.

It is found in the cytoplasm. It carries out the reaction 3-amino-2-oxopropyl phosphate + 1-deoxy-D-xylulose 5-phosphate = pyridoxine 5'-phosphate + phosphate + 2 H2O + H(+). Its pathway is cofactor biosynthesis; pyridoxine 5'-phosphate biosynthesis; pyridoxine 5'-phosphate from D-erythrose 4-phosphate: step 5/5. Functionally, catalyzes the complicated ring closure reaction between the two acyclic compounds 1-deoxy-D-xylulose-5-phosphate (DXP) and 3-amino-2-oxopropyl phosphate (1-amino-acetone-3-phosphate or AAP) to form pyridoxine 5'-phosphate (PNP) and inorganic phosphate. The sequence is that of Pyridoxine 5'-phosphate synthase from Thiobacillus denitrificans (strain ATCC 25259 / T1).